The sequence spans 106 residues: DTATCGKVFYSASAVSAASNAACNYVRAGSTAGGSTYPHVYNNYEGFRFKGLSKPFYEFPILSSGKTYTGGSPGADRVVINGQCSIAGIITHTGASGNAFVACGGT.

2 disulfide bridges follow: cysteine 5-cysteine 103 and cysteine 23-cysteine 84. Histidine 39 is an active-site residue. Glutamate 58 serves as the catalytic Proton acceptor. Residue histidine 92 is the Proton donor of the active site.

It belongs to the ribonuclease N1/T1 family.

It carries out the reaction [RNA] containing guanosine + H2O = an [RNA fragment]-3'-guanosine-3'-phosphate + a 5'-hydroxy-ribonucleotide-3'-[RNA fragment].. The protein is Guanyl-specific ribonuclease Th1 of Trichoderma harzianum (Hypocrea lixii).